The sequence spans 101 residues: Iron-sulfur cluster assembly protein CyaY (101 aa).

Belongs to the frataxin family.

Functionally, involved in iron-sulfur (Fe-S) cluster assembly. May act as a regulator of Fe-S biogenesis. This is Iron-sulfur cluster assembly protein CyaY from Haemophilus influenzae (strain 86-028NP).